The following is a 105-amino-acid chain: Large ribosomal subunit protein uL23 (105 aa).

It belongs to the universal ribosomal protein uL23 family. In terms of assembly, part of the 50S ribosomal subunit. Contacts protein L29, and trigger factor when it is bound to the ribosome.

In terms of biological role, one of the early assembly proteins it binds 23S rRNA. One of the proteins that surrounds the polypeptide exit tunnel on the outside of the ribosome. Forms the main docking site for trigger factor binding to the ribosome. The chain is Large ribosomal subunit protein uL23 from Ureaplasma parvum serovar 3 (strain ATCC 27815 / 27 / NCTC 11736).